Consider the following 181-residue polypeptide: MKSIAVTGYKNFELGIFKKDADEAVYIKETIKRHLIPLIEDGLEWVIISGQLGIELWAGEVVALLKEEYPIKLAVLEPFEKQSANWNENNQLWAQEVIGAADYHAFITKRPYESPAQFAARDGFIIDNTDGALLVYDLEKEGSPKFFYDRAKLAKEQANYFLECIDFYALQDVVEDMNQTF.

It belongs to the UPF0398 family.

This is UPF0398 protein lin2003 from Listeria innocua serovar 6a (strain ATCC BAA-680 / CLIP 11262).